The chain runs to 316 residues: Probable cell division protein WhiA (316 aa).

The H-T-H motif DNA-binding region spans 275–309 (TLKELGEMVSGGKISKSGINHRLRKIDEIAEKLRA).

It belongs to the WhiA family.

Functionally, involved in cell division and chromosome segregation. This chain is Probable cell division protein WhiA, found in Bacillus mycoides (strain KBAB4) (Bacillus weihenstephanensis).